The chain runs to 738 residues: NAD(P)H-quinone oxidoreductase subunit 5, chloroplastic (738 aa).

Transmembrane regions (helical) follow at residues 9–29 (WVIPLLPLPVIMSMGFGLFLI), 39–59 (IWAFPSILLLSIAMVFSLHLS), 89–109 (VDPLTSIMLILITTVGILVLI), 125–145 (FVYISFFNTSMLGLVTSSNLI), 147–167 (IYFFWELVGMCSYLLIGFWFT), 185–205 (GDFGLLLGILGFFWITGSLEF), 219–239 (NGINSLLTTLCAFLLFLGAVA), 258–278 (TPISALIHAATMVAAGIFLLA), 280–300 (LLPLFISLPLIMSFISLVGTI), 327–347 (LGYMMLALGIGSYQAALFHLI), 354–374 (ALLFLGSGSVIHSMEPLVGYS), 396–416 (TTFLCGTLSLCGIPPLACFWS), 425–445 (WLYSPFFGIIASFTAGLTAFY), 542–562 (LFPLLILLLFTLFIGSIGIPF), 610–630 (SLAIFGLFIAYIFYGSAYSFF), 691–711 (GVIDGIINGVGLAGFCIGEEI), and 717–737 (GRISSYLFFFLCYVSLFLFFI).

This sequence belongs to the complex I subunit 5 family. NDH is composed of at least 16 different subunits, 5 of which are encoded in the nucleus.

It is found in the plastid. Its subcellular location is the chloroplast thylakoid membrane. The enzyme catalyses a plastoquinone + NADH + (n+1) H(+)(in) = a plastoquinol + NAD(+) + n H(+)(out). It catalyses the reaction a plastoquinone + NADPH + (n+1) H(+)(in) = a plastoquinol + NADP(+) + n H(+)(out). In terms of biological role, NDH shuttles electrons from NAD(P)H:plastoquinone, via FMN and iron-sulfur (Fe-S) centers, to quinones in the photosynthetic chain and possibly in a chloroplast respiratory chain. The immediate electron acceptor for the enzyme in this species is believed to be plastoquinone. Couples the redox reaction to proton translocation, and thus conserves the redox energy in a proton gradient. In Sorghum bicolor (Sorghum), this protein is NAD(P)H-quinone oxidoreductase subunit 5, chloroplastic (ndhF).